A 102-amino-acid polypeptide reads, in one-letter code: Small ribosomal subunit protein uS10 (102 aa).

This sequence belongs to the universal ribosomal protein uS10 family. Part of the 30S ribosomal subunit.

In terms of biological role, involved in the binding of tRNA to the ribosomes. This Trichlorobacter lovleyi (strain ATCC BAA-1151 / DSM 17278 / SZ) (Geobacter lovleyi) protein is Small ribosomal subunit protein uS10.